Here is a 565-residue protein sequence, read N- to C-terminus: Mediator of RNA polymerase II transcription subunit 17 (565 aa).

Over residues 138 to 152 the composition is skewed to polar residues; the sequence is TSLNSDRLGQDSNDN. The tract at residues 138 to 160 is disordered; sequence TSLNSDRLGQDSNDNQESKATDS.

This sequence belongs to the Mediator complex subunit 17 family. Component of the Mediator complex.

It is found in the nucleus. In terms of biological role, component of the Mediator complex, a coactivator involved in the regulated transcription of nearly all RNA polymerase II-dependent genes. Mediator functions as a bridge to convey information from gene-specific regulatory proteins to the basal RNA polymerase II transcription machinery. Mediator is recruited to promoters by direct interactions with regulatory proteins and serves as a scaffold for the assembly of a functional preinitiation complex with RNA polymerase II and the general transcription factors. The chain is Mediator of RNA polymerase II transcription subunit 17 (SRB4) from Candida albicans (strain SC5314 / ATCC MYA-2876) (Yeast).